The chain runs to 82 residues: MKLLMLIVALMIIGVQSKDGYPMDHKGCKISCVINNKYCETECVTVLKGKKGYCYFWKLACYCEGLPNWAKVWDRATNKCRA.

Positions 1–17 are cleaved as a signal peptide; sequence MKLLMLIVALMIIGVQS. One can recognise an LCN-type CS-alpha/beta domain in the interval 18 to 81; the sequence is KDGYPMDHKG…VWDRATNKCR (64 aa). Disulfide bonds link cysteine 28/cysteine 80, cysteine 32/cysteine 54, cysteine 39/cysteine 61, and cysteine 43/cysteine 63.

Belongs to the long (4 C-C) scorpion toxin superfamily. Sodium channel inhibitor family. Beta subfamily. In terms of tissue distribution, expressed by the venom gland.

Its subcellular location is the secreted. Its function is as follows. Beta toxins bind voltage-independently at site-4 of sodium channels (Nav) and shift the voltage of activation toward more negative potentials thereby affecting sodium channel activation and promoting spontaneous and repetitive firing. This toxin compete with high affinity with 125I-Css4 bound on rat brain synaptosome and may bind with high affinity to Nav1.1/SCN1A, Nav1.2/SCN2A and Nav1.6/SCN8A. This chain is Beta-neurotoxin Css9, found in Centruroides suffusus (Durango bark scorpion).